The primary structure comprises 290 residues: MEKKYELNKNLAQMIKNGVIMDVVNPEQAKIAEEAGAIAVMALERVPSDIRKQGGVARTSDPKMIKEIINAVSIPVMAKVRIGHFVEAQILEAIGVDCIDESEVLTPADDLFHINKKDFKVPFVCGARNLGEALRRIGEGASMIRTKGEAGTGNVVEAVRHMRTISSEMRKLQLTPKEELMTVAKEMGAPFNLIEYVAEKGKLPVINFAAGGIATPADAALMMQLGCDGIFVGSGIFKSDSPEKRAKAIVKATTYFKDPDVLAKVSENLGGAMSGLEISKLETEFAERGW.

Residue aspartate 22 coordinates D-ribose 5-phosphate. The active-site Schiff-base intermediate with D-ribose 5-phosphate is lysine 79. Glycine 151 lines the D-ribose 5-phosphate pocket. Residue arginine 163 participates in D-glyceraldehyde 3-phosphate binding. Residues glycine 212 and 233–234 contribute to the D-ribose 5-phosphate site; that span reads GS.

Belongs to the PdxS/SNZ family. As to quaternary structure, in the presence of PdxT, forms a dodecamer of heterodimers.

It carries out the reaction aldehydo-D-ribose 5-phosphate + D-glyceraldehyde 3-phosphate + L-glutamine = pyridoxal 5'-phosphate + L-glutamate + phosphate + 3 H2O + H(+). Its pathway is cofactor biosynthesis; pyridoxal 5'-phosphate biosynthesis. Catalyzes the formation of pyridoxal 5'-phosphate from ribose 5-phosphate (RBP), glyceraldehyde 3-phosphate (G3P) and ammonia. The ammonia is provided by the PdxT subunit. Can also use ribulose 5-phosphate and dihydroxyacetone phosphate as substrates, resulting from enzyme-catalyzed isomerization of RBP and G3P, respectively. This is Pyridoxal 5'-phosphate synthase subunit PdxS from Clostridium botulinum (strain Langeland / NCTC 10281 / Type F).